The sequence spans 246 residues: MADS-box protein EJ2 (246 aa).

The 61-residue stretch at 1–61 (MGRGRVELKR…GKLYEFCSTS (61 aa)) folds into the MADS-box domain. The K-box domain occupies 87–177 (TQNNYHEYLR…RRKLEESVAG (91 aa)).

Its subcellular location is the nucleus. In terms of biological role, MADS-box transcription factor that acts redundantly with J2 to control meristem maturation and inflorescence architecture. The sequence is that of MADS-box protein EJ2 from Solanum lycopersicum (Tomato).